Reading from the N-terminus, the 53-residue chain is MEKFVCDVCGYIYDPVVGDPDNGVAPGTKFKDIPDTWVCPLCKLDKTHFSKVE.

One can recognise a Rubredoxin-like domain in the interval 1-53; it reads MEKFVCDVCGYIYDPVVGDPDNGVAPGTKFKDIPDTWVCPLCKLDKTHFSKVE. The Fe cation site is built by cysteine 6, cysteine 9, cysteine 39, and cysteine 42.

Belongs to the rubredoxin family. Requires Fe(3+) as cofactor.

Functionally, rubredoxin is a small nonheme, iron protein lacking acid-labile sulfide. Its single Fe, chelated to 4 Cys, functions as an electron acceptor and may also stabilize the conformation of the molecule. The protein is Rubredoxin-1 (rubR1) of Clostridium perfringens (strain 13 / Type A).